Reading from the N-terminus, the 479-residue chain is Cruciferin PGCRURSE5 (479 aa).

The N-terminal stretch at 1-23 (MVKLAHLLVATFGVLLVLNGCLA) is a signal peptide. 2 disulfide bridges follow: C37/C70 and C113/C296. Residues 42 to 241 (LDVLQPTETI…ALKMQLRLAQ (200 aa)) form the Cupin type-1 1 domain. The residue at position 116 (T116) is a Phosphothreonine. Disordered stretches follow at residues 117 to 144 (FMDS…GFRD), 196 to 219 (RTFR…QQQN), and 271 to 291 (YESE…DNGL). Positions 124-141 (QGQGQQGQQGQQGQQQQG) are enriched in low complexity. The Cupin type-1 2 domain maps to 302–451 (ENIDDPARAD…AFQISLEEAR (150 aa)). Residues T415 and T440 each carry the phosphothreonine modification.

It belongs to the 11S seed storage protein (globulins) family. Hexamer; each subunit is composed of an acidic and a basic chain derived from a single precursor and linked by a disulfide bond.

Its function is as follows. This is a seed storage protein. The protein is Cruciferin PGCRURSE5 (CRURS) of Raphanus sativus (Radish).